Consider the following 286-residue polypeptide: Alpha-ketoglutarate-dependent dioxygenase alkB homolog 3 (286 aa).

The interval 1-46 (MEDKRQRARVQGGWATPTKSQSATQPASPARSRLSQTAGPAWRSKE) is disordered. A compositionally biased stretch (polar residues) spans 17 to 38 (PTKSQSATQPASPARSRLSQTA). Residues Trp-115 and 141–143 (YTY) contribute to the substrate site. One can recognise a Fe2OG dioxygenase domain in the interval 172-278 (TFNSLLCNFY…RVNLTFRTVY (107 aa)). At Leu-177 the chain carries (4R)-5-hydroxyleucine; alternate. (4R)-5-oxoleucine; alternate is present on Leu-177. 179–181 (NFY) contributes to the 2-oxoglutarate binding site. 2 residues coordinate Fe cation: His-191 and Asp-193. Residue Asp-194 participates in substrate binding. Fe cation is bound at residue His-257. Residues 269 to 275 (RVNLTFR) and Arg-275 contribute to the 2-oxoglutarate site.

The protein belongs to the alkB family. In terms of assembly, interacts with the ASCC complex composed of ASCC1, ASCC2 and ASCC3. Interacts directly with ASCC3, and is thereby recruited to the ASCC complex. Interacts with OTUD4; the interaction is direct. Interacts with USP7 and USP9X. The cofactor is Fe(2+). Ubiquitinated; undergoes 'Lys-48'-linked polyubiquitination. OTUD4 promotes USP7 and USP9X-dependent deubiquitination of 'Lys-48'-polyubiquitinated ALKBH3 promoting the repair of alkylated DNA lesions. In terms of tissue distribution, detected in testis, kidney, liver and heart.

The protein resides in the nucleus. It localises to the cytoplasm. The catalysed reaction is an N(1)-methyladenosine in mRNA + 2-oxoglutarate + O2 = an adenosine in mRNA + formaldehyde + succinate + CO2. It carries out the reaction a methylated nucleobase within DNA + 2-oxoglutarate + O2 = a nucleobase within DNA + formaldehyde + succinate + CO2. It catalyses the reaction an N(1)-methyl-2'-deoxyadenosine in single-stranded DNA + 2-oxoglutarate + O2 = a 2'-deoxyadenosine in single-stranded DNA + formaldehyde + succinate + CO2 + H(+). The enzyme catalyses an N(3)-methyl-2'-deoxycytidine in single-stranded DNA + 2-oxoglutarate + O2 = a 2'-deoxycytidine in single-stranded DNA + formaldehyde + succinate + CO2 + H(+). The catalysed reaction is a 3,N(4)-etheno-2'-deoxycytidine in single-stranded DNA + 2-oxoglutarate + O2 + H2O = a 2'-deoxycytidine in single-stranded DNA + glyoxal + succinate + CO2. Its activity is regulated as follows. Activated by ascorbate. In terms of biological role, dioxygenase that mediates demethylation of DNA and RNA containing 1-methyladenosine (m1A). Repairs alkylated DNA containing 1-methyladenosine (m1A) and 3-methylcytosine (m3C) by oxidative demethylation. Has a strong preference for single-stranded DNA. Able to process alkylated m3C within double-stranded regions via its interaction with ASCC3, which promotes DNA unwinding to generate single-stranded substrate needed for ALKBH3. Can repair exocyclic 3,N4-ethenocytosine adducs in single-stranded DNA. Also acts on RNA. Demethylates N(1)-methyladenosine (m1A) RNA, an epigenetic internal modification of messenger RNAs (mRNAs) highly enriched within 5'-untranslated regions (UTRs) and in the vicinity of start codons. Requires molecular oxygen, alpha-ketoglutarate and iron. The sequence is that of Alpha-ketoglutarate-dependent dioxygenase alkB homolog 3 from Mus musculus (Mouse).